Here is a 57-residue protein sequence, read N- to C-terminus: Small ribosomal subunit protein bS21 (57 aa).

The protein belongs to the bacterial ribosomal protein bS21 family.

The protein is Small ribosomal subunit protein bS21 of Bacillus pumilus (strain SAFR-032).